We begin with the raw amino-acid sequence, 198 residues long: Recombination protein RecR (198 aa).

The C4-type zinc finger occupies 57–72 (CSVCGHITDTDPCYIC). Residues 80 to 175 (SMICVVEETK…KVTRLAHGLP (96 aa)) enclose the Toprim domain.

Belongs to the RecR family.

May play a role in DNA repair. It seems to be involved in an RecBC-independent recombinational process of DNA repair. It may act with RecF and RecO. This chain is Recombination protein RecR, found in Macrococcus caseolyticus (strain JCSC5402) (Macrococcoides caseolyticum).